The following is a 449-amino-acid chain: Asparagine--tRNA ligase (449 aa).

It belongs to the class-II aminoacyl-tRNA synthetase family. Homodimer.

Its subcellular location is the cytoplasm. The catalysed reaction is tRNA(Asn) + L-asparagine + ATP = L-asparaginyl-tRNA(Asn) + AMP + diphosphate + H(+). The chain is Asparagine--tRNA ligase from Desulfotalea psychrophila (strain LSv54 / DSM 12343).